Here is a 188-residue protein sequence, read N- to C-terminus: D-glycero-beta-D-manno-heptose-1,7-bisphosphate 7-phosphatase (188 aa).

4 residues coordinate Zn(2+): C92, H94, C107, and C109.

Belongs to the GmhB family.

Its subcellular location is the cytoplasm. The catalysed reaction is D-glycero-beta-D-manno-heptose 1,7-bisphosphate + H2O = D-glycero-beta-D-manno-heptose 1-phosphate + phosphate. The protein operates within nucleotide-sugar biosynthesis; ADP-L-glycero-beta-D-manno-heptose biosynthesis; ADP-L-glycero-beta-D-manno-heptose from D-glycero-beta-D-manno-heptose 7-phosphate: step 2/4. It participates in bacterial outer membrane biogenesis; LPS core biosynthesis. Converts the D-glycero-beta-D-manno-heptose 1,7-bisphosphate intermediate into D-glycero-beta-D-manno-heptose 1-phosphate by removing the phosphate group at the C-7 position. The sequence is that of D-glycero-beta-D-manno-heptose-1,7-bisphosphate 7-phosphatase (gmhB1) from Photorhabdus laumondii subsp. laumondii (strain DSM 15139 / CIP 105565 / TT01) (Photorhabdus luminescens subsp. laumondii).